Consider the following 782-residue polypeptide: Endonuclease MutS2 (782 aa).

336-343 (GPNTGGKT) is a binding site for ATP. A Smr domain is found at 707–782 (LDLRGYRYED…GFGVTVATLK (76 aa)).

The protein belongs to the DNA mismatch repair MutS family. MutS2 subfamily. As to quaternary structure, homodimer. Binds to stalled ribosomes, contacting rRNA.

Functionally, endonuclease that is involved in the suppression of homologous recombination and thus may have a key role in the control of bacterial genetic diversity. Its function is as follows. Acts as a ribosome collision sensor, splitting the ribosome into its 2 subunits. Detects stalled/collided 70S ribosomes which it binds and splits by an ATP-hydrolysis driven conformational change. Acts upstream of the ribosome quality control system (RQC), a ribosome-associated complex that mediates the extraction of incompletely synthesized nascent chains from stalled ribosomes and their subsequent degradation. Probably generates substrates for RQC. The protein is Endonuclease MutS2 of Staphylococcus aureus (strain bovine RF122 / ET3-1).